The chain runs to 201 residues: Hydroxymethylphosphonate dioxygenase (201 aa).

Positions 47, 71, 72, 94, 117, and 174 each coordinate Fe cation.

Requires Fe(2+) as cofactor.

The catalysed reaction is hydroxymethylphosphonate + O2 = formate + phosphate + 2 H(+). It catalyses the reaction (1R)-(2-amino-1-hydroxyethyl)phosphonate + O2 = glycine + phosphate + 2 H(+). The enzyme catalyses (1R)-(1-hydroxyethyl)phosphonate + O2 = acetate + phosphate + 2 H(+). Functionally, part of an oxidative pathway for utilization of methylphosphonic acid as a phosphate source. Catalyzes the oxidation of hydroxymethylphosphonic acid to produce formate and phosphate. Can also use (1R)-(2-amino-1-hydroxyethyl)phosphonic acid and (R)-1-hydroxyethylphosphonic acid with similar catalytic efficiency. The protein is Hydroxymethylphosphonate dioxygenase of Gimesia maris (strain ATCC 29201 / DSM 8797 / 534-30) (Planctomyces maris).